A 246-amino-acid chain; its full sequence is Phosphate import ATP-binding protein PstB (246 aa).

One can recognise an ABC transporter domain in the interval 3–241 (AKTTNLNLFY…PKQEKTKAYL (239 aa)). Residue 35–42 (GASGCGKS) participates in ATP binding.

It belongs to the ABC transporter superfamily. Phosphate importer (TC 3.A.1.7) family. As to quaternary structure, the complex is composed of two ATP-binding proteins (PstB), two transmembrane proteins (PstC and PstA) and a solute-binding protein (PstS).

The protein resides in the cell inner membrane. It catalyses the reaction phosphate(out) + ATP + H2O = ADP + 2 phosphate(in) + H(+). Its function is as follows. Part of the ABC transporter complex PstSACB involved in phosphate import. Responsible for energy coupling to the transport system. The chain is Phosphate import ATP-binding protein PstB from Campylobacter jejuni subsp. jejuni serotype O:2 (strain ATCC 700819 / NCTC 11168).